A 736-amino-acid polypeptide reads, in one-letter code: Centrosomal protein kizuna (736 aa).

Positions 10–35 (HRAMKLQRNLRHCEGKRLELERELFQ) form a coiled coil. Residues 192–208 (NTSFQLSQKMPVTSVAS) show a composition bias toward polar residues. Disordered stretches follow at residues 192–238 (NTSF…SAQL), 279–305 (SFTHANPSGASPDACDYINNQTSDKHS), 323–348 (EDKQCLDSSSDLTVSISESEDDSYPP), and 642–690 (TVEE…NMST). Over residues 210-219 (EDGRTHRAQI) the composition is skewed to basic and acidic residues. A compositionally biased stretch (polar residues) spans 328 to 339 (LDSSSDLTVSIS). Positions 658-668 (SETSFSSSEKS) are enriched in low complexity. Residues 678–690 (IQPNYMKSNNMST) show a composition bias toward polar residues.

The protein belongs to the kizuna family.

It is found in the cytoplasm. Its subcellular location is the cytoskeleton. It localises to the microtubule organizing center. The protein resides in the centrosome. The protein localises to the cilium basal body. Functionally, centrosomal protein required for establishing a robust mitotic centrosome architecture that can endure the forces that converge on the centrosomes during spindle formation. Required for stabilizing the expanded pericentriolar material around the centriole. The chain is Centrosomal protein kizuna (kiz) from Xenopus laevis (African clawed frog).